A 523-amino-acid polypeptide reads, in one-letter code: Probable malate:quinone oxidoreductase 1 (523 aa).

The protein belongs to the MQO family. FAD is required as a cofactor.

The enzyme catalyses (S)-malate + a quinone = a quinol + oxaloacetate. It functions in the pathway carbohydrate metabolism; tricarboxylic acid cycle; oxaloacetate from (S)-malate (quinone route): step 1/1. The sequence is that of Probable malate:quinone oxidoreductase 1 from Pseudomonas aeruginosa (strain ATCC 15692 / DSM 22644 / CIP 104116 / JCM 14847 / LMG 12228 / 1C / PRS 101 / PAO1).